The primary structure comprises 230 residues: Urease accessory protein UreF (230 aa).

The protein belongs to the UreF family. In terms of assembly, ureD, UreF and UreG form a complex that acts as a GTP-hydrolysis-dependent molecular chaperone, activating the urease apoprotein by helping to assemble the nickel containing metallocenter of UreC. The UreE protein probably delivers the nickel.

It is found in the cytoplasm. Its function is as follows. Required for maturation of urease via the functional incorporation of the urease nickel metallocenter. In Marinomonas sp. (strain MWYL1), this protein is Urease accessory protein UreF.